The primary structure comprises 530 residues: Growth-regulating factor 1 (530 aa).

Residues 1–41 (MDLGVRVSGHETVSSPGQTELGSGFSNKQERSGFDGEDCWR) are disordered. Residues 11-27 (ETVSSPGQTELGSGFSN) show a composition bias toward polar residues. A compositionally biased stretch (basic and acidic residues) spans 28–41 (KQERSGFDGEDCWR). Residues 133-168 (PFSLTQWAELEQQALIYKYITANVPVPSSLLLSLKK) enclose the QLQ domain. Residues 196–240 (DPEPGRCRRTDGKKWRCSRDAVPDQKYCERHINRGRHRSRKPVEG) form the WRC domain. Short sequence motifs (bipartite nuclear localization signal) lie at residues 201 to 211 (RCRRTDGKKWR) and 229 to 236 (RGRHRSRK). 2 disordered regions span residues 223–250 (CERH…NAAA) and 485–530 (STFG…APSL). Residues 485–508 (STFGSLSNSSSASSTIIGDNNNKN) are compositionally biased toward low complexity. The span at 519–530 (TLMNTSATAPSL) shows a compositional bias: polar residues.

It belongs to the GRF family. In terms of assembly, interacts with GIF1 and GIF2. In terms of tissue distribution, strongly expressed in actively growing and developing tissues, such as roots, upper stems, and shoot tips containing the shoot apical meristem (SAM) and flower buds. Also expressed in mature flowers, but weakly expressed in mature stems and leaves.

The protein localises to the nucleus. Its function is as follows. Transcription activator that plays a role in the regulation of cell expansion in leaf and cotyledons tissues. Component of a network formed by miR396, the GRFs and their interacting factors (GIFs) acting in the regulation of meristem function, at least partially through the control of cell proliferation. microRNA396-GRF1/GRF3 regulatory module acts as a developmental regulator in the reprogramming of root cells during cyst nematode infection, leading to the formation of the syncytium. The sequence is that of Growth-regulating factor 1 (GRF1) from Arabidopsis thaliana (Mouse-ear cress).